The primary structure comprises 66 residues: Large ribosomal subunit protein uL29 (66 aa).

The protein belongs to the universal ribosomal protein uL29 family.

This chain is Large ribosomal subunit protein uL29, found in Methylibium petroleiphilum (strain ATCC BAA-1232 / LMG 22953 / PM1).